The sequence spans 338 residues: Ketol-acid reductoisomerase (NADP(+)) (338 aa).

Residues 1–181 (MKVFYDKDCD…GGGRTGIIET (181 aa)) enclose the KARI N-terminal Rossmann domain. NADP(+)-binding positions include 24–27 (YGSQ), Arg47, Ser50, Thr52, and 82–85 (DEFQ). The active site involves His107. Gly133 serves as a coordination point for NADP(+). Residues 182-327 (TFKDETETDL…EQLRSMMPWI (146 aa)) form the KARI C-terminal knotted domain. The Mg(2+) site is built by Asp190, Glu194, Glu226, and Glu230. Ser251 contributes to the substrate binding site.

It belongs to the ketol-acid reductoisomerase family. Mg(2+) serves as cofactor.

It carries out the reaction (2R)-2,3-dihydroxy-3-methylbutanoate + NADP(+) = (2S)-2-acetolactate + NADPH + H(+). The enzyme catalyses (2R,3R)-2,3-dihydroxy-3-methylpentanoate + NADP(+) = (S)-2-ethyl-2-hydroxy-3-oxobutanoate + NADPH + H(+). It functions in the pathway amino-acid biosynthesis; L-isoleucine biosynthesis; L-isoleucine from 2-oxobutanoate: step 2/4. It participates in amino-acid biosynthesis; L-valine biosynthesis; L-valine from pyruvate: step 2/4. Functionally, involved in the biosynthesis of branched-chain amino acids (BCAA). Catalyzes an alkyl-migration followed by a ketol-acid reduction of (S)-2-acetolactate (S2AL) to yield (R)-2,3-dihydroxy-isovalerate. In the isomerase reaction, S2AL is rearranged via a Mg-dependent methyl migration to produce 3-hydroxy-3-methyl-2-ketobutyrate (HMKB). In the reductase reaction, this 2-ketoacid undergoes a metal-dependent reduction by NADPH to yield (R)-2,3-dihydroxy-isovalerate. In Pseudomonas putida (strain ATCC 700007 / DSM 6899 / JCM 31910 / BCRC 17059 / LMG 24140 / F1), this protein is Ketol-acid reductoisomerase (NADP(+)).